The following is a 162-amino-acid chain: uncharacterized protein (162 aa).

Positions 65–76 are enriched in basic and acidic residues; that stretch reads EEKPLEVAQDRN. The tract at residues 65–93 is disordered; sequence EEKPLEVAQDRNNKRKAPSHLEPAHDFIS.

This is an uncharacterized protein from Bacillus subtilis (strain 168).